The chain runs to 83 residues: Mu-theraphotoxin-Hhn2j 1 (83 aa).

An N-terminal signal peptide occupies residues 1 to 21 (MKASMFLALAGLVLLFVVGYA). Positions 22 to 48 (SESEEKEFPIELLSKIFAVDVFKGEER) are excised as a propeptide. Disulfide bonds link Cys-50/Cys-65, Cys-57/Cys-70, and Cys-64/Cys-77. Leu-81 is modified (leucine amide).

It belongs to the neurotoxin 10 (Hwtx-1) family. 15 (Hntx-3) subfamily. Monomer. As to expression, expressed by the venom gland.

The protein localises to the secreted. Its function is as follows. Lethal neurotoxin. Selectively blocks tetrodotoxin-sensitive voltage-gated sodium channels (Nav). Does not affect tetrodotoxin-resistant voltage-gated sodium channels or calcium channels. The polypeptide is Mu-theraphotoxin-Hhn2j 1 (Cyriopagopus hainanus (Chinese bird spider)).